We begin with the raw amino-acid sequence, 568 residues long: 2-succinyl-5-enolpyruvyl-6-hydroxy-3-cyclohexene-1-carboxylate synthase (568 aa).

The protein belongs to the TPP enzyme family. MenD subfamily. As to quaternary structure, homodimer. Mg(2+) is required as a cofactor. Requires Mn(2+) as cofactor. Thiamine diphosphate serves as cofactor.

The enzyme catalyses isochorismate + 2-oxoglutarate + H(+) = 5-enolpyruvoyl-6-hydroxy-2-succinyl-cyclohex-3-ene-1-carboxylate + CO2. It participates in quinol/quinone metabolism; 1,4-dihydroxy-2-naphthoate biosynthesis; 1,4-dihydroxy-2-naphthoate from chorismate: step 2/7. Its pathway is quinol/quinone metabolism; menaquinone biosynthesis. Functionally, catalyzes the thiamine diphosphate-dependent decarboxylation of 2-oxoglutarate and the subsequent addition of the resulting succinic semialdehyde-thiamine pyrophosphate anion to isochorismate to yield 2-succinyl-5-enolpyruvyl-6-hydroxy-3-cyclohexene-1-carboxylate (SEPHCHC). This Haemophilus influenzae (strain PittEE) protein is 2-succinyl-5-enolpyruvyl-6-hydroxy-3-cyclohexene-1-carboxylate synthase.